Reading from the N-terminus, the 68-residue chain is MGMRMMFTVFLLVVLATTVVSFTSDRGSDGRNAAAKDKASDLVALTVKGCCSNPPCYANNQAYCNGRR.

An N-terminal signal peptide occupies residues 1-21 (MGMRMMFTVFLLVVLATTVVS). The propeptide occupies 22-48 (FTSDRGSDGRNAAAKDKASDLVALTVK). Disulfide bonds link Cys-50-Cys-56 and Cys-51-Cys-64. The tract at residues 52–54 (SNP) is ser-Xaa-Pro motif, crucial for potent interaction with nAChR. Asn-65 is modified (asparagine amide).

It belongs to the conotoxin A superfamily. As to expression, expressed by the venom duct.

The protein localises to the secreted. Its function is as follows. Alpha-conotoxins act on postsynaptic membranes, they bind to the nicotinic acetylcholine receptors (nAChR) and thus inhibit them. The sequence is that of Alpha-conotoxin-like Mr1.2 from Conus marmoreus (Marble cone).